Reading from the N-terminus, the 160-residue chain is Cytochrome b6-f complex subunit 4 (160 aa).

3 helical membrane-spanning segments follow: residues 36-56 (LLYI…GLSV), 95-115 (LLGV…PFIE), and 131-151 (TLFL…TLPI).

Belongs to the cytochrome b family. PetD subfamily. In terms of assembly, the 4 large subunits of the cytochrome b6-f complex are cytochrome b6, subunit IV (17 kDa polypeptide, petD), cytochrome f and the Rieske protein, while the 4 small subunits are petG, petL, petM and petN. The complex functions as a dimer.

The protein resides in the plastid. It localises to the chloroplast thylakoid membrane. Functionally, component of the cytochrome b6-f complex, which mediates electron transfer between photosystem II (PSII) and photosystem I (PSI), cyclic electron flow around PSI, and state transitions. The polypeptide is Cytochrome b6-f complex subunit 4 (Tetradesmus obliquus (Green alga)).